Consider the following 79-residue polypeptide: Acyl carrier protein (79 aa).

One can recognise a Carrier domain in the interval 2-77 (SDIEARVKKI…LAIDYAKSHA (76 aa)). An O-(pantetheine 4'-phosphoryl)serine modification is found at Ser37.

Belongs to the acyl carrier protein (ACP) family. In terms of processing, 4'-phosphopantetheine is transferred from CoA to a specific serine of apo-ACP by AcpS. This modification is essential for activity because fatty acids are bound in thioester linkage to the sulfhydryl of the prosthetic group.

It is found in the cytoplasm. Its pathway is lipid metabolism; fatty acid biosynthesis. Carrier of the growing fatty acid chain in fatty acid biosynthesis. In Methylibium petroleiphilum (strain ATCC BAA-1232 / LMG 22953 / PM1), this protein is Acyl carrier protein.